We begin with the raw amino-acid sequence, 267 residues long: Tryptophan synthase alpha chain (267 aa).

Residues glutamate 43 and aspartate 54 each act as proton acceptor in the active site.

Belongs to the TrpA family. In terms of assembly, tetramer of two alpha and two beta chains.

The enzyme catalyses (1S,2R)-1-C-(indol-3-yl)glycerol 3-phosphate + L-serine = D-glyceraldehyde 3-phosphate + L-tryptophan + H2O. It functions in the pathway amino-acid biosynthesis; L-tryptophan biosynthesis; L-tryptophan from chorismate: step 5/5. Its function is as follows. The alpha subunit is responsible for the aldol cleavage of indoleglycerol phosphate to indole and glyceraldehyde 3-phosphate. The chain is Tryptophan synthase alpha chain from Bacillus subtilis (strain 168).